We begin with the raw amino-acid sequence, 276 residues long: Expansin-A25 (276 aa).

Residues Met1 to Gly27 form the signal peptide. Residues Gln73–Gly183 form the Expansin-like EG45 domain. The 80-residue stretch at Tyr193 to Gly272 folds into the Expansin-like CBD domain.

The protein belongs to the expansin family. Expansin A subfamily.

Its subcellular location is the secreted. The protein localises to the cell wall. It is found in the membrane. Its function is as follows. Causes loosening and extension of plant cell walls by disrupting non-covalent bonding between cellulose microfibrils and matrix glucans. No enzymatic activity has been found. The polypeptide is Expansin-A25 (EXPA25) (Arabidopsis thaliana (Mouse-ear cress)).